The chain runs to 204 residues: Lysozyme G (204 aa).

Positions 1-19 (MHLMLVLLGLAALLGTSQS) are cleaved as a signal peptide. 2 cysteine pairs are disulfide-bonded: C23/C79 and C37/C48. Catalysis depends on residues E92 and D105.

The protein belongs to the glycosyl hydrolase 23 family.

The protein localises to the secreted. The catalysed reaction is Hydrolysis of (1-&gt;4)-beta-linkages between N-acetylmuramic acid and N-acetyl-D-glucosamine residues in a peptidoglycan and between N-acetyl-D-glucosamine residues in chitodextrins.. Has bacteriolytic activity against M.luteus. This Dromaius novaehollandiae (Emu) protein is Lysozyme G.